The primary structure comprises 431 residues: Serine--tRNA ligase (431 aa).

235-237 (TSE) contributes to the L-serine binding site. Residue 266-268 (RSE) coordinates ATP. L-serine is bound at residue Glu-289. 353-356 (EISS) lines the ATP pocket. An L-serine-binding site is contributed by Ser-388.

Belongs to the class-II aminoacyl-tRNA synthetase family. Type-1 seryl-tRNA synthetase subfamily. Homodimer. The tRNA molecule binds across the dimer.

The protein localises to the cytoplasm. It carries out the reaction tRNA(Ser) + L-serine + ATP = L-seryl-tRNA(Ser) + AMP + diphosphate + H(+). The enzyme catalyses tRNA(Sec) + L-serine + ATP = L-seryl-tRNA(Sec) + AMP + diphosphate + H(+). It participates in aminoacyl-tRNA biosynthesis; selenocysteinyl-tRNA(Sec) biosynthesis; L-seryl-tRNA(Sec) from L-serine and tRNA(Sec): step 1/1. Functionally, catalyzes the attachment of serine to tRNA(Ser). Is also able to aminoacylate tRNA(Sec) with serine, to form the misacylated tRNA L-seryl-tRNA(Sec), which will be further converted into selenocysteinyl-tRNA(Sec). This chain is Serine--tRNA ligase, found in Paraburkholderia phytofirmans (strain DSM 17436 / LMG 22146 / PsJN) (Burkholderia phytofirmans).